Here is a 109-residue protein sequence, read N- to C-terminus: MLEPFQILSICSFILSALHFMAWTIGHLNQIKRGVNLKIRIRNPNKETINREVSILRHSYQKEIQAKETMKEVLSDNMEILSDHIVIEGLSAEEIIKMGETVLEVEELH.

Over 1–4 (MLEP) the chain is Virion surface. Residues 5–27 (FQILSICSFILSALHFMAWTIGH) form a helical; Signal-anchor for type III membrane protein membrane-spanning segment. Over 28–109 (LNQIKRGVNL…ETVLEVEELH (82 aa)) the chain is Intravirion.

In terms of assembly, homotetramer. In terms of processing, phosphorylated by host.

It is found in the virion membrane. It localises to the host cell membrane. Functionally, forms presumably a highly low-pH gated proton-selective channel. Trp-23 may function as a minimalistic gate that opens and closes the pore. When the environmental pH is lower than a threshold, the BM2 channel would be activated and selectively transport protons across the membrane from the extracellular side to the cytoplasmic side. Crucial for the uncoating process. When the virion is internalized into the endosome, the channel acidifies the virion's interior, promoting the dissociation of matrix protein 1 (M1) from the ribonucleoprotein (RNP) thus allowing the transport of the RNP from the virion into the cell's nucleus. Also plays a role in viral protein secretory pathway. Elevates the intravesicular pH of normally acidic compartments, such as trans-Golgi network, preventing newly formed hemagglutinin from premature switching to the fusion-active conformation. Plays a crucial role in virion assembly. Expressed in the late phase of the infection. The sequence is that of Matrix protein 2 (M) from Homo sapiens (Human).